The sequence spans 431 residues: Metal-binding activator 1 (431 aa).

A DNA-binding region (copper-fist) is located at residues 1 to 40 (MILIDDIKYACMECVRGHRSSSCKHHERPLLQVRSKGRPG). Cys-11, Cys-14, Cys-23, and His-25 together coordinate Zn(2+).

Its subcellular location is the nucleus. Its function is as follows. Copper ion-sensing transcription factor which activates transcription of the CTR1 copper transporter under low-copper conditions. Promotes filamentous and invasive growth. This is Metal-binding activator 1 (MAC1) from Candida albicans (strain SC5314 / ATCC MYA-2876) (Yeast).